Consider the following 308-residue polypeptide: MICMHFSVLLQESIADLNINPEGIYIDATFGRGGHSKAILDKLTSGRLIAFDKDLDAIDYATHNFQNDNFEMVHASFTYIYDYCLQHNLLGRVDGIIMDLGVSSPQLDNANRGFSFTHDGPLDMRMDISKGLTASQALEELSVDELTYIFKVYGEERFAKKIALRIKGYIAENGSITTTHQLAELIRATIGKREKKNPATRCFQALRIYVNDELKDLEILLESILDVIKKGGRVAAISFHSLEDRIVKQKFTSLINPKQETNRIAKMLPQDNSQVKMKWITKKAKANQDELSQNVRSRSAILRVVEKL.

Residues 33-35 (GGH), Asp52, Tyr81, Asp99, and Gln106 contribute to the S-adenosyl-L-methionine site.

The protein belongs to the methyltransferase superfamily. RsmH family.

Its subcellular location is the cytoplasm. The catalysed reaction is cytidine(1402) in 16S rRNA + S-adenosyl-L-methionine = N(4)-methylcytidine(1402) in 16S rRNA + S-adenosyl-L-homocysteine + H(+). In terms of biological role, specifically methylates the N4 position of cytidine in position 1402 (C1402) of 16S rRNA. The polypeptide is Ribosomal RNA small subunit methyltransferase H (Francisella philomiragia subsp. philomiragia (strain ATCC 25017 / CCUG 19701 / FSC 153 / O#319-036)).